The chain runs to 317 residues: MHHFNRAKKAKNNEFFTLIDEIENEVINYQKQFANKTIFCNCNDGKNSHFFQFFQTNFNQLQLKKLIGFSFNNLSQADKFTFDGNKVTKTKLKGNGDFSSDESIEVLKQADIVVTNPPFSLFQSFIDLLIQHNKQFLVLGLNAAVSYNHIFTYFKTNKLWFGYTVNKTMSFSVNSDYQLYNPKTSNFFTKNGKCFQKIAGISWFTNLGKPHYNPFLNTNCFYKNNEKNYPKFDWYDAIYVNKIKNIPMDWNGLMGVPLTFLNCYNPKQFELVDCLANPYATLDTLKTNAFVKLNQGDVRNVNGKRRYVRVIIKKQQI.

The protein belongs to the N(4)/N(6)-methyltransferase family.

The catalysed reaction is a 2'-deoxyadenosine in DNA + S-adenosyl-L-methionine = an N(6)-methyl-2'-deoxyadenosine in DNA + S-adenosyl-L-homocysteine + H(+). Functionally, probably recognizes the double-stranded sequence 5'-CTAT-3' and methylates A-3 on only one strand; as the bacterial DNA is methylated on this sequence and this is the only type II methylase in the genome, it is probably responsible for all of the methylation on this site in the genome. This Mycoplasma genitalium (strain ATCC 33530 / DSM 19775 / NCTC 10195 / G37) (Mycoplasmoides genitalium) protein is Type II methyltransferase M.MgeORF184P.